We begin with the raw amino-acid sequence, 232 residues long: LexA repressor (232 aa).

The H-T-H motif DNA-binding region spans 26–46 (FDEMKDALDLRSKSGIHRLIT). Active-site for autocatalytic cleavage activity residues include S153 and K191.

It belongs to the peptidase S24 family. As to quaternary structure, homodimer.

The catalysed reaction is Hydrolysis of Ala-|-Gly bond in repressor LexA.. Represses a number of genes involved in the response to DNA damage (SOS response), including recA and lexA. In the presence of single-stranded DNA, RecA interacts with LexA causing an autocatalytic cleavage which disrupts the DNA-binding part of LexA, leading to derepression of the SOS regulon and eventually DNA repair. The polypeptide is LexA repressor (Afipia carboxidovorans (strain ATCC 49405 / DSM 1227 / KCTC 32145 / OM5) (Oligotropha carboxidovorans)).